An 896-amino-acid chain; its full sequence is Microsomal triglyceride transfer protein large subunit (896 aa).

Residues 1 to 21 (MILLAVLFLCFFSSYSASVKG) form the signal peptide. In terms of domain architecture, Vitellogenin spans 28–659 (LNNERLYKLT…IFQYIGKAEL (632 aa)). Cysteines 174 and 194 form a disulfide.

As to quaternary structure, heterodimer; heterodimerizes with the protein disulfide isomerase (P4HB/PDI). Interacts with APOB. Interacts with PRAP1.

Its subcellular location is the endoplasmic reticulum. The protein localises to the golgi apparatus. The catalysed reaction is a 1,2-diacyl-sn-glycero-3-phosphocholine(in) = a 1,2-diacyl-sn-glycero-3-phosphocholine(out). The enzyme catalyses a 1,2-diacyl-sn-glycero-3-phosphoethanolamine(in) = a 1,2-diacyl-sn-glycero-3-phosphoethanolamine(out). It catalyses the reaction a cholesterol ester(in) = a cholesterol ester(out). It carries out the reaction a triacyl-sn-glycerol(in) = a triacyl-sn-glycerol(out). Catalyzes the transport of triglyceride, cholesteryl ester, and phospholipid between phospholipid surfaces. Required for the assembly and secretion of plasma lipoproteins that contain apolipoprotein B. May be involved in regulating cholesteryl ester biosynthesis in cells that produce lipoproteins. This chain is Microsomal triglyceride transfer protein large subunit (Mttp), found in Rattus norvegicus (Rat).